The primary structure comprises 362 residues: Aminomethyltransferase (362 aa).

Belongs to the GcvT family. The glycine cleavage system is composed of four proteins: P, T, L and H.

It catalyses the reaction N(6)-[(R)-S(8)-aminomethyldihydrolipoyl]-L-lysyl-[protein] + (6S)-5,6,7,8-tetrahydrofolate = N(6)-[(R)-dihydrolipoyl]-L-lysyl-[protein] + (6R)-5,10-methylene-5,6,7,8-tetrahydrofolate + NH4(+). Functionally, the glycine cleavage system catalyzes the degradation of glycine. The protein is Aminomethyltransferase of Chloroherpeton thalassium (strain ATCC 35110 / GB-78).